The sequence spans 380 residues: Spore coat protein B (380 aa).

The tract at residues 224 to 364 is disordered; the sequence is GPKGSYKKED…SSGKQKEDYS (141 aa). A compositionally biased stretch (basic and acidic residues) spans 229 to 248; that stretch reads YKKEDQKNEQNQEDNNDKDS. Composition is skewed to low complexity over residues 275–288, 296–315, and 338–356; these read SKSG…SSSK, SSDY…SSSK, and SSDY…IKSS.

The polypeptide is Spore coat protein B (cotB) (Bacillus subtilis (strain 168)).